A 751-amino-acid chain; its full sequence is E3 ubiquitin-protein ligase SMURF2 (751 aa).

One can recognise a C2 domain in the interval 1 to 119; the sequence is MSNQGSRRNG…TGYQRLDLCK (119 aa). A WW 1 domain is found at 157–190; that stretch reads NDLPDGWEERRTASGRIQYLNHITRTTQWERPTR. Over residues 214–226 the composition is skewed to polar residues; the sequence is GTNGASCGQTSDP. Residues 214 to 236 are disordered; the sequence is GTNGASCGQTSDPRISERRVRSQ. 2 consecutive WW domains span residues 251-284 and 297-330; these read PDLP…DPRV and GPLP…DPRL. An HECT domain is found at 417 to 751; sequence RPKDLWKRLM…IEETCGFAVE (335 aa). Residue Cys-719 is the Glycyl thioester intermediate of the active site.

The protein localises to the nucleus. It is found in the cytoplasm. The protein resides in the cell membrane. Its subcellular location is the membrane raft. It catalyses the reaction S-ubiquitinyl-[E2 ubiquitin-conjugating enzyme]-L-cysteine + [acceptor protein]-L-lysine = [E2 ubiquitin-conjugating enzyme]-L-cysteine + N(6)-ubiquitinyl-[acceptor protein]-L-lysine.. Its pathway is protein modification; protein ubiquitination. Functionally, E3 ubiquitin-protein ligase which accepts ubiquitin from an E2 ubiquitin-conjugating enzyme in the form of a thioester and then directly transfers the ubiquitin to targeted substrates. This Xenopus laevis (African clawed frog) protein is E3 ubiquitin-protein ligase SMURF2 (smurf2).